The following is a 312-amino-acid chain: Porphobilinogen deaminase (312 aa).

An S-(dipyrrolylmethanemethyl)cysteine modification is found at Cys-241.

The protein belongs to the HMBS family. In terms of assembly, monomer. Dipyrromethane serves as cofactor.

The enzyme catalyses 4 porphobilinogen + H2O = hydroxymethylbilane + 4 NH4(+). It participates in porphyrin-containing compound metabolism; protoporphyrin-IX biosynthesis; coproporphyrinogen-III from 5-aminolevulinate: step 2/4. Tetrapolymerization of the monopyrrole PBG into the hydroxymethylbilane pre-uroporphyrinogen in several discrete steps. The chain is Porphobilinogen deaminase from Pelotomaculum thermopropionicum (strain DSM 13744 / JCM 10971 / SI).